The chain runs to 282 residues: Putative quercetin 2,3-dioxygenase VC_A0969 (282 aa).

Residues 1 to 21 are disordered; sequence MTKDREIRQTVPAQPTSDGDG. A divalent metal cation contacts are provided by His-59, His-61, His-103, and Glu-105.

Belongs to the pirin family. Requires a divalent metal cation as cofactor.

The enzyme catalyses quercetin + O2 = 2-(3,4-dihydroxybenzoyloxy)-4,6-dihydroxybenzoate + CO. The protein operates within flavonoid metabolism; quercetin degradation. Functionally, putative quercetin 2,3-dioxygenase. The chain is Putative quercetin 2,3-dioxygenase VC_A0969 from Vibrio cholerae serotype O1 (strain ATCC 39315 / El Tor Inaba N16961).